The following is a 405-amino-acid chain: Acetylornithine aminotransferase 1 (405 aa).

Pyridoxal 5'-phosphate-binding positions include 108 to 109 and F141; that span reads GA. Residue R144 coordinates N(2)-acetyl-L-ornithine. 226–229 contacts pyridoxal 5'-phosphate; it reads DEVQ. N6-(pyridoxal phosphate)lysine is present on K255. Residue T283 participates in N(2)-acetyl-L-ornithine binding. Residue T284 coordinates pyridoxal 5'-phosphate.

The protein belongs to the class-III pyridoxal-phosphate-dependent aminotransferase family. ArgD subfamily. As to quaternary structure, homodimer. Pyridoxal 5'-phosphate is required as a cofactor.

The protein resides in the cytoplasm. It carries out the reaction N(2)-acetyl-L-ornithine + 2-oxoglutarate = N-acetyl-L-glutamate 5-semialdehyde + L-glutamate. Its pathway is amino-acid biosynthesis; L-arginine biosynthesis; N(2)-acetyl-L-ornithine from L-glutamate: step 4/4. The polypeptide is Acetylornithine aminotransferase 1 (Pseudomonas syringae pv. tomato (strain ATCC BAA-871 / DC3000)).